The primary structure comprises 219 residues: 7-cyano-7-deazaguanine synthase (219 aa).

10–20 (FSGGQDSTTCL) serves as a coordination point for ATP. Zn(2+)-binding residues include Cys186, Cys195, Cys198, and Cys201.

It belongs to the QueC family. As to quaternary structure, homodimer. It depends on Zn(2+) as a cofactor.

It catalyses the reaction 7-carboxy-7-deazaguanine + NH4(+) + ATP = 7-cyano-7-deazaguanine + ADP + phosphate + H2O + H(+). Its pathway is purine metabolism; 7-cyano-7-deazaguanine biosynthesis. Its function is as follows. Catalyzes the ATP-dependent conversion of 7-carboxy-7-deazaguanine (CDG) to 7-cyano-7-deazaguanine (preQ(0)). The chain is 7-cyano-7-deazaguanine synthase from Bacillus licheniformis (strain ATCC 14580 / DSM 13 / JCM 2505 / CCUG 7422 / NBRC 12200 / NCIMB 9375 / NCTC 10341 / NRRL NRS-1264 / Gibson 46).